A 390-amino-acid chain; its full sequence is Chaperone protein DnaJ (390 aa).

Residues 6–70 (DYYEILGVPR…QKRAQYDQFG (65 aa)) enclose the J domain. The segment at 146 to 228 (GSEKEIYVTR…CHGTGKVRRK (83 aa)) adopts a CR-type zinc-finger fold. Zn(2+) is bound by residues Cys-159, Cys-162, Cys-176, Cys-179, Cys-202, Cys-205, Cys-216, and Cys-219. CXXCXGXG motif repeat units lie at residues 159–166 (CPTCKGKG), 176–183 (CDMCNGTG), 202–209 (CPKCHGTG), and 216–223 (CHECHGTG).

The protein belongs to the DnaJ family. In terms of assembly, homodimer. It depends on Zn(2+) as a cofactor.

Its subcellular location is the cytoplasm. Participates actively in the response to hyperosmotic and heat shock by preventing the aggregation of stress-denatured proteins and by disaggregating proteins, also in an autonomous, DnaK-independent fashion. Unfolded proteins bind initially to DnaJ; upon interaction with the DnaJ-bound protein, DnaK hydrolyzes its bound ATP, resulting in the formation of a stable complex. GrpE releases ADP from DnaK; ATP binding to DnaK triggers the release of the substrate protein, thus completing the reaction cycle. Several rounds of ATP-dependent interactions between DnaJ, DnaK and GrpE are required for fully efficient folding. Also involved, together with DnaK and GrpE, in the DNA replication of plasmids through activation of initiation proteins. The sequence is that of Chaperone protein DnaJ from Dictyoglomus thermophilum (strain ATCC 35947 / DSM 3960 / H-6-12).